The chain runs to 360 residues: Peptide chain release factor 1 (360 aa).

N5-methylglutamine is present on Gln234. Residues Arg285–Arg305 form a disordered region.

The protein belongs to the prokaryotic/mitochondrial release factor family. Post-translationally, methylated by PrmC. Methylation increases the termination efficiency of RF1.

It is found in the cytoplasm. Functionally, peptide chain release factor 1 directs the termination of translation in response to the peptide chain termination codons UAG and UAA. The chain is Peptide chain release factor 1 from Clostridium beijerinckii (strain ATCC 51743 / NCIMB 8052) (Clostridium acetobutylicum).